A 489-amino-acid polypeptide reads, in one-letter code: uncharacterized protein (489 aa).

Thr26 is subject to Phosphothreonine. A Phosphoserine modification is found at Ser27. 3 consecutive transmembrane segments (helical) span residues Ile63 to Ala83, Leu182 to Ala202, and Val221 to Leu241. 3 disordered regions span residues Pro260 to Glu312, Ser401 to Ser435, and Pro450 to His489. Ser263 carries the phosphoserine modification. Polar residues predominate over residues Gln268–Asn282. Over residues Pro450–Asn465 the composition is skewed to polar residues. Positions Ser477–His489 are enriched in low complexity.

Its subcellular location is the endoplasmic reticulum membrane. This is an uncharacterized protein from Schizosaccharomyces pombe (strain 972 / ATCC 24843) (Fission yeast).